A 962-amino-acid polypeptide reads, in one-letter code: MTRTEILSNGHAEPASNGMVQYPFDNVVDALRAAANTTEGIIAYQTNNSGSETTPAQHISYKELLRTAEANAALLQSKHLTTPKQPVVVHSDNAVDSMIWYWSVLLTGAIPTMTGPGMFSQDAVERKKHLLHLHRTLDAPLCLTRRALMGPFNENAGLLQCLAFEDLSPSPDGSNASLPPSINPSPMDVAALMLTSGSSGTAKAVPITHQQVLAALRGKTAVAQLSHPTSPFLSWVHMDHVANLVHCHLFAIVAGVSQVQVPAANVLVDPMQLLNLLSRHRVSRTFAPNFLFAKLRRQFDAGRTDSLDADLNLAALYLDTGGEANVIDVCAGLQPILARYGAPADVFKPSFGMTETCAGCIFNSHCPSYDQARLHEFASLGTPMPGVRMRISRLDGSGEAAPGERGHLEITGEAIFHGYYNNPTATADAFTADGWFRTGDLAYIDAGGHLHLDGRTKEMVNINGVKYLPHELDAALEQAEIPGATPTYFCCFGTRTAAMDTEVVAVLYLPAYDEADDAARFDAQSSIIRLISMYTHSRPRVVPLRREDMPKTTLGKLSRAKLQAALEAGQFAAYEAANEAAIRRHRDTMRGEPASAEEATILSIIREQLEIPEADDFGVTDSILSMGATSMDLVAIMQRVNRQLQLRKTLALTDMLNYATARGLCQRIAATSGTGRKHVYDPVVVLQPHGRKTPLWLVHPGVGEVLVFVNLAHHITDRPVYAFRAKGFNAAEGETPFTSLEEVFETYKAAMKARQPQGPYAIAGYSFGGMVAFEIAKRLEAEGDEVRYCGSWNLPPHIKWRMKQLLWDECIIHLFYFVDLMDEETAYTHKPKLCELERQGRRLEAVRYLRQHSNPARWDELGLSEEYYLLWVNLASNMQGMATEYEPSGNVKHLDVFVADPLTHVARTREEWVNGLLAAWKDFVREGVRYHHVEGAHYTMLKPEYVANFAKTLRTVLRERGV.

The adenylation (A) domain stretch occupies residues 34–462 (AANTTEGIIA…DGRTKEMVNI (429 aa)). The 78-residue stretch at 595-672 (SAEEATILSI…GLCQRIAATS (78 aa)) folds into the Carrier domain. Ser-630 carries the O-(pantetheine 4'-phosphoryl)serine modification. The thioesterase (TE) domain stretch occupies residues 694 to 951 (PLWLVHPGVG…KPEYVANFAK (258 aa)).

Belongs to the NRP synthetase family.

Its pathway is secondary metabolite biosynthesis. Its function is as follows. Nonribosomal peptide synthetase; part of the gene cluster that mediates the biosynthesis of asterriquinone CT5, a natural product that displays potential biological activities including antitumor and insulin mimic activities. The nonribosomal peptide synthetase atqA is responsible for the production of the benzoquinone derivative didemethylasterriquinone D (DDAQ D), via condensation of 2 indole pyruvic acid (IPA) molecules. The symmetric connectivity of the 2 IPA molecules is thought to arise by head-to-tail dual Claisen condensations catalyzed by the TE domain of atqA. DDAQ D represents the core structure of asterriquinones and is further modified by yet unidentified tailoring enzymes to lead to the production of asterriquinone CT5. The protein is Nonribosomal peptide synthetase atqA of Aspergillus terreus (strain NIH 2624 / FGSC A1156).